Consider the following 842-residue polypeptide: Elongation factor 2 (842 aa).

One can recognise a tr-type G domain in the interval 17–253 (TNVRNMSVIA…LWGDSYFNPK (237 aa)). Residues 26–33 (AHVDHGKS), 158–161 (NKVD), and 213–215 (SGL) contribute to the GTP site. Diphthamide is present on H699.

It belongs to the TRAFAC class translation factor GTPase superfamily. Classic translation factor GTPase family. EF-G/EF-2 subfamily.

It localises to the cytoplasm. It catalyses the reaction GTP + H2O = GDP + phosphate + H(+). In terms of biological role, catalyzes the GTP-dependent ribosomal translocation step during translation elongation. During this step, the ribosome changes from the pre-translocational (PRE) to the post-translocational (POST) state as the newly formed A-site-bound peptidyl-tRNA and P-site-bound deacylated tRNA move to the P and E sites, respectively. Catalyzes the coordinated movement of the two tRNA molecules, the mRNA and conformational changes in the ribosome. This chain is Elongation factor 2 (EFT1), found in Naumovozyma castellii (Yeast).